We begin with the raw amino-acid sequence, 513 residues long: Sphingolipid C9-methyltransferase (513 aa).

Helical transmembrane passes span 52–72 (ILFS…GLGF) and 74–94 (TWVF…WSIM). S-adenosyl-L-methionine-binding positions include 222–223 (YT), 259–267 (VLDIGCGWG), 285–290 (TLGRNQ), and 315–316 (YR).

The protein belongs to the CFA/CMAS family.

The protein resides in the membrane. The enzyme catalyses a (4E,8E)-4-sphinga-4,8-dienine ceramide + S-adenosyl-L-methionine = a 9-methyl-(4E,8E)-sphinga-4,8-dienine ceramide + S-adenosyl-L-homocysteine + H(+). It participates in lipid metabolism; sphingolipid metabolism. Catalyzes methylation of the sphingoid base component of glucosylceramides (GluCers) at the C9-position. Sphingolipid C9-methylation requires 4,8-desaturated ceramides as substrates. Glucosylceramides play important roles in growth, differentiation and pathogenicity. The methyl group at the C9-position distinguishes fungal glucosylceramides from those of plants and animals, and may thus play a role in host-pathogen interactions enabling the host to recognize the fungal attack and initiate specific defense responses. Not necessary for vegetative growth at low temperatures, but plays a role in hyphal formation on solid medium. The polypeptide is Sphingolipid C9-methyltransferase (Candida albicans (strain SC5314 / ATCC MYA-2876) (Yeast)).